Reading from the N-terminus, the 239-residue chain is Peptidyl-tRNA hydrolase (239 aa).

Tyr14 is a binding site for tRNA. His19 serves as the catalytic Proton acceptor. TRNA contacts are provided by Phe64, Asn66, and Asn112. Residues 188–239 (APPRSSTSKPKAQDNREDAAQAAEERSETRTPPEARPEDTRSALQKLADKFR) form a disordered region. The segment covering 198–239 (KAQDNREDAAQAAEERSETRTPPEARPEDTRSALQKLADKFR) has biased composition (basic and acidic residues).

The protein belongs to the PTH family. Monomer.

The protein resides in the cytoplasm. It catalyses the reaction an N-acyl-L-alpha-aminoacyl-tRNA + H2O = an N-acyl-L-amino acid + a tRNA + H(+). Hydrolyzes ribosome-free peptidyl-tRNAs (with 1 or more amino acids incorporated), which drop off the ribosome during protein synthesis, or as a result of ribosome stalling. In terms of biological role, catalyzes the release of premature peptidyl moieties from peptidyl-tRNA molecules trapped in stalled 50S ribosomal subunits, and thus maintains levels of free tRNAs and 50S ribosomes. This Jannaschia sp. (strain CCS1) protein is Peptidyl-tRNA hydrolase.